The sequence spans 199 residues: Imidazoleglycerol-phosphate dehydratase (199 aa).

Belongs to the imidazoleglycerol-phosphate dehydratase family.

It localises to the cytoplasm. It carries out the reaction D-erythro-1-(imidazol-4-yl)glycerol 3-phosphate = 3-(imidazol-4-yl)-2-oxopropyl phosphate + H2O. The protein operates within amino-acid biosynthesis; L-histidine biosynthesis; L-histidine from 5-phospho-alpha-D-ribose 1-diphosphate: step 6/9. This Methylibium petroleiphilum (strain ATCC BAA-1232 / LMG 22953 / PM1) protein is Imidazoleglycerol-phosphate dehydratase.